The following is an 823-amino-acid chain: Zygotic DNA replication licensing factor mcm6 (823 aa).

The segment at 159–186 (CLDCQTLVRDVEQQFKYTQPSICRNPVC) adopts a C4-type zinc-finger fold. Residues 347-554 (LYHNLCTSLF…TDYAIARRIV (208 aa)) enclose the MCM domain. 397–404 (GDPSTAKS) serves as a coordination point for ATP. The short motif at 529-532 (SRFD) is the Arginine finger element. The tract at residues 666–713 (NLDQEDEHEAEEEPQEVINGDASVPSGVNGHVNGMNGHAEEPNAATPK) is disordered. A compositionally biased stretch (acidic residues) spans 667–680 (LDQEDEHEAEEEPQ). Over residues 692–702 (GVNGHVNGMNG) the composition is skewed to low complexity.

Belongs to the MCM family. As to quaternary structure, component of the mcm2-7 complex (RLF-M). The complex forms a toroidal hexameric ring with the proposed subunit order mcm2-mcm6-mcm4-mcm7-mcm3-mcm5. Begins to associate with zmcm3, mcm4 and mcm7 into mcm complexes at the neurula stage.

Its subcellular location is the nucleus. The enzyme catalyses ATP + H2O = ADP + phosphate + H(+). Its function is as follows. Acts as a component of the mcm2-7 complex (mcm complex) which is the putative replicative helicase essential for 'once per cell cycle' DNA replication initiation and elongation in eukaryotic cells. The active ATPase sites in the mcm2-7 ring are formed through the interaction surfaces of two neighboring subunits such that a critical structure of a conserved arginine finger motif is provided in trans relative to the ATP-binding site of the Walker A box of the adjacent subunit. The six ATPase active sites, however, are likely to contribute differentially to the complex helicase activity. The existence of maternal and zygotic forms of mcm3 and mcm6 suggests that specific forms of mcm2-7 complexes may be used during different stages of development. May replace mmcm6 in the mcm2-7 complex. The sequence is that of Zygotic DNA replication licensing factor mcm6 from Xenopus tropicalis (Western clawed frog).